Here is a 353-residue protein sequence, read N- to C-terminus: Nicotinate-nucleotide--dimethylbenzimidazole phosphoribosyltransferase (353 aa).

Glu320 functions as the Proton acceptor in the catalytic mechanism.

Belongs to the CobT family.

It catalyses the reaction 5,6-dimethylbenzimidazole + nicotinate beta-D-ribonucleotide = alpha-ribazole 5'-phosphate + nicotinate + H(+). It functions in the pathway nucleoside biosynthesis; alpha-ribazole biosynthesis; alpha-ribazole from 5,6-dimethylbenzimidazole: step 1/2. Functionally, catalyzes the synthesis of alpha-ribazole-5'-phosphate from nicotinate mononucleotide (NAMN) and 5,6-dimethylbenzimidazole (DMB). This chain is Nicotinate-nucleotide--dimethylbenzimidazole phosphoribosyltransferase, found in Syntrophotalea carbinolica (strain DSM 2380 / NBRC 103641 / GraBd1) (Pelobacter carbinolicus).